The sequence spans 139 residues: Nucleoside diphosphate kinase (139 aa).

ATP contacts are provided by K11, F59, R87, T93, R104, and N114. H117 functions as the Pros-phosphohistidine intermediate in the catalytic mechanism.

The protein belongs to the NDK family. As to quaternary structure, homotetramer. Mg(2+) is required as a cofactor.

It localises to the cytoplasm. The catalysed reaction is a 2'-deoxyribonucleoside 5'-diphosphate + ATP = a 2'-deoxyribonucleoside 5'-triphosphate + ADP. It catalyses the reaction a ribonucleoside 5'-diphosphate + ATP = a ribonucleoside 5'-triphosphate + ADP. In terms of biological role, major role in the synthesis of nucleoside triphosphates other than ATP. The ATP gamma phosphate is transferred to the NDP beta phosphate via a ping-pong mechanism, using a phosphorylated active-site intermediate. In Wolbachia pipientis subsp. Culex pipiens (strain wPip), this protein is Nucleoside diphosphate kinase.